We begin with the raw amino-acid sequence, 135 residues long: Ribosome-binding factor A (135 aa).

The protein belongs to the RbfA family. As to quaternary structure, monomer. Binds 30S ribosomal subunits, but not 50S ribosomal subunits or 70S ribosomes.

It is found in the cytoplasm. In terms of biological role, one of several proteins that assist in the late maturation steps of the functional core of the 30S ribosomal subunit. Associates with free 30S ribosomal subunits (but not with 30S subunits that are part of 70S ribosomes or polysomes). Required for efficient processing of 16S rRNA. May interact with the 5'-terminal helix region of 16S rRNA. This chain is Ribosome-binding factor A, found in Caldicellulosiruptor saccharolyticus (strain ATCC 43494 / DSM 8903 / Tp8T 6331).